A 156-amino-acid chain; its full sequence is Small ribosomal subunit protein uS7 (156 aa).

It belongs to the universal ribosomal protein uS7 family. As to quaternary structure, part of the 30S ribosomal subunit. Contacts proteins S9 and S11.

In terms of biological role, one of the primary rRNA binding proteins, it binds directly to 16S rRNA where it nucleates assembly of the head domain of the 30S subunit. Is located at the subunit interface close to the decoding center, probably blocks exit of the E-site tRNA. The chain is Small ribosomal subunit protein uS7 from Paramagnetospirillum magneticum (strain ATCC 700264 / AMB-1) (Magnetospirillum magneticum).